The sequence spans 260 residues: Adenosylcobinamide-GDP ribazoletransferase (260 aa).

Transmembrane regions (helical) follow at residues 31 to 51, 57 to 77, 108 to 128, 131 to 151, 173 to 193, 206 to 226, and 240 to 260; these read FYFLPLIGGLIAGLVLIPIYF, IEISGFISLLLYLFLTGSIHL, YGTIGLNVFLLLRYINYSTII, AGLLILAGIISRLSGLAVVVF, FFFWLVLVCFLSLFTPEIAAF, LKYLLLPLTAFILTFIIIRIS, and LIVELTELAVLSTSFFINVHL.

This sequence belongs to the CobS family. Mg(2+) is required as a cofactor.

Its subcellular location is the cell inner membrane. It carries out the reaction alpha-ribazole + adenosylcob(III)inamide-GDP = adenosylcob(III)alamin + GMP + H(+). It catalyses the reaction alpha-ribazole 5'-phosphate + adenosylcob(III)inamide-GDP = adenosylcob(III)alamin 5'-phosphate + GMP + H(+). The protein operates within cofactor biosynthesis; adenosylcobalamin biosynthesis; adenosylcobalamin from cob(II)yrinate a,c-diamide: step 7/7. Joins adenosylcobinamide-GDP and alpha-ribazole to generate adenosylcobalamin (Ado-cobalamin). Also synthesizes adenosylcobalamin 5'-phosphate from adenosylcobinamide-GDP and alpha-ribazole 5'-phosphate. This chain is Adenosylcobinamide-GDP ribazoletransferase, found in Treponema denticola (strain ATCC 35405 / DSM 14222 / CIP 103919 / JCM 8153 / KCTC 15104).